Consider the following 112-residue polypeptide: UPF0342 protein STH1710 (112 aa).

This sequence belongs to the UPF0342 family.

This chain is UPF0342 protein STH1710, found in Symbiobacterium thermophilum (strain DSM 24528 / JCM 14929 / IAM 14863 / T).